Reading from the N-terminus, the 407-residue chain is Multifunctional CCA protein (407 aa).

ATP-binding residues include Gly8 and Arg11. Positions 8 and 11 each coordinate CTP. Mg(2+)-binding residues include Asp21 and Asp23. Positions 91, 137, and 140 each coordinate ATP. Positions 91, 137, and 140 each coordinate CTP. The 102-residue stretch at 228–329 (TGIHTLMVAQ…IKIFDKMDVW (102 aa)) folds into the HD domain.

It belongs to the tRNA nucleotidyltransferase/poly(A) polymerase family. Bacterial CCA-adding enzyme type 1 subfamily. As to quaternary structure, monomer. Can also form homodimers and oligomers. The cofactor is Mg(2+). Requires Ni(2+) as cofactor.

It catalyses the reaction a tRNA precursor + 2 CTP + ATP = a tRNA with a 3' CCA end + 3 diphosphate. The enzyme catalyses a tRNA with a 3' CCA end + 2 CTP + ATP = a tRNA with a 3' CCACCA end + 3 diphosphate. Its function is as follows. Catalyzes the addition and repair of the essential 3'-terminal CCA sequence in tRNAs without using a nucleic acid template. Adds these three nucleotides in the order of C, C, and A to the tRNA nucleotide-73, using CTP and ATP as substrates and producing inorganic pyrophosphate. tRNA 3'-terminal CCA addition is required both for tRNA processing and repair. Also involved in tRNA surveillance by mediating tandem CCA addition to generate a CCACCA at the 3' terminus of unstable tRNAs. While stable tRNAs receive only 3'-terminal CCA, unstable tRNAs are marked with CCACCA and rapidly degraded. The sequence is that of Multifunctional CCA protein from Aliivibrio fischeri (strain ATCC 700601 / ES114) (Vibrio fischeri).